Consider the following 468-residue polypeptide: RUS family member 1 (468 aa).

An N-acetylalanine modification is found at Ala-2. Thr-49 carries the post-translational modification Phosphothreonine. The chain crosses the membrane as a helical span at residues 247–267 (LLMLPLVSGCPGFSLGCFFFL).

This sequence belongs to the RUS1 family.

The protein localises to the membrane. This chain is RUS family member 1 (Rusf1), found in Pongo abelii (Sumatran orangutan).